A 241-amino-acid chain; its full sequence is Aliphatic sulfonates import ATP-binding protein SsuB (241 aa).

The ABC transporter domain maps to 10-226 (VHLHGFSRSF…RPDHPAFMQL (217 aa)). 42–49 (GESGSGKT) is a binding site for ATP.

Belongs to the ABC transporter superfamily. Aliphatic sulfonates importer (TC 3.A.1.17.2) family. The complex is composed of two ATP-binding proteins (SsuB), two transmembrane proteins (SsuC) and a solute-binding protein (SsuA).

Its subcellular location is the cell inner membrane. It catalyses the reaction ATP + H2O + aliphatic sulfonate-[sulfonate-binding protein]Side 1 = ADP + phosphate + aliphatic sulfonateSide 2 + [sulfonate-binding protein]Side 1.. In terms of biological role, part of the ABC transporter complex SsuABC involved in aliphatic sulfonates import. Responsible for energy coupling to the transport system. This Delftia acidovorans (Pseudomonas acidovorans) protein is Aliphatic sulfonates import ATP-binding protein SsuB.